Consider the following 115-residue polypeptide: MRRFVLIFVLLILPFQFSWAAAARYCQHEKATATWHLGHHEHRHQQPEGKTDAEKKPFVDTDCGVCHLVSLPFVYGQTQDVLIANRVEVTDTQHSSEFSSLNARAPDRPQWQRLA.

The first 20 residues, 1–20 (MRRFVLIFVLLILPFQFSWA), serve as a signal peptide directing secretion. The span at 93 to 102 (QHSSEFSSLN) shows a compositional bias: polar residues. The tract at residues 93–115 (QHSSEFSSLNARAPDRPQWQRLA) is disordered.

The protein localises to the periplasm. In terms of biological role, component of the czc cation-efflux system that confers resistance to cobalt, zinc and cadmium. May have a regulatory function. The polypeptide is Cobalt-zinc-cadmium resistance protein CzcI (czcI) (Cupriavidus metallidurans (strain ATCC 43123 / DSM 2839 / NBRC 102507 / CH34) (Ralstonia metallidurans)).